The sequence spans 437 residues: Glutamyl-tRNA reductase (437 aa).

Residues 49–52 (TCNR), Ser-109, 114–116 (EGQ), and Gln-120 contribute to the substrate site. Cys-50 functions as the Nucleophile in the catalytic mechanism. 198–203 (GAGRMS) contacts NADP(+).

It belongs to the glutamyl-tRNA reductase family. Homodimer.

It catalyses the reaction (S)-4-amino-5-oxopentanoate + tRNA(Glu) + NADP(+) = L-glutamyl-tRNA(Glu) + NADPH + H(+). The protein operates within porphyrin-containing compound metabolism; protoporphyrin-IX biosynthesis; 5-aminolevulinate from L-glutamyl-tRNA(Glu): step 1/2. It functions in the pathway porphyrin-containing compound metabolism; chlorophyll biosynthesis. Its function is as follows. Catalyzes the NADPH-dependent reduction of glutamyl-tRNA(Glu) to glutamate 1-semialdehyde (GSA). The polypeptide is Glutamyl-tRNA reductase (Prochlorococcus marinus (strain SARG / CCMP1375 / SS120)).